A 278-amino-acid chain; its full sequence is tRNA (guanine-N(7)-)-methyltransferase (278 aa).

S-adenosyl-L-methionine-binding positions include glycine 63, 86–87 (EL), 119–120 (NA), and leucine 139. Residue aspartate 142 is part of the active site. 217–219 (TEE) provides a ligand contact to S-adenosyl-L-methionine. The segment at 259–278 (IDSTTTTTTSTATITEVESK) is disordered. The span at 261–278 (STTTTTTSTATITEVESK) shows a compositional bias: low complexity.

Belongs to the class I-like SAM-binding methyltransferase superfamily. TrmB family.

Its subcellular location is the nucleus. It catalyses the reaction guanosine(46) in tRNA + S-adenosyl-L-methionine = N(7)-methylguanosine(46) in tRNA + S-adenosyl-L-homocysteine. Its pathway is tRNA modification; N(7)-methylguanine-tRNA biosynthesis. Catalyzes the formation of N(7)-methylguanine at position 46 (m7G46) in tRNA. This chain is tRNA (guanine-N(7)-)-methyltransferase (mettl1), found in Dictyostelium discoideum (Social amoeba).